Reading from the N-terminus, the 433-residue chain is Glutamate-1-semialdehyde 2,1-aminomutase (433 aa).

Lys271 is modified (N6-(pyridoxal phosphate)lysine).

The protein belongs to the class-III pyridoxal-phosphate-dependent aminotransferase family. HemL subfamily. As to quaternary structure, homodimer. The cofactor is pyridoxal 5'-phosphate.

Its subcellular location is the cytoplasm. It carries out the reaction (S)-4-amino-5-oxopentanoate = 5-aminolevulinate. The protein operates within porphyrin-containing compound metabolism; protoporphyrin-IX biosynthesis; 5-aminolevulinate from L-glutamyl-tRNA(Glu): step 2/2. Its pathway is porphyrin-containing compound metabolism; chlorophyll biosynthesis. The polypeptide is Glutamate-1-semialdehyde 2,1-aminomutase (Prochlorococcus marinus (strain MIT 9215)).